Here is a 97-residue protein sequence, read N- to C-terminus: Large ribosomal subunit protein bL27 (97 aa).

The span at 1 to 10 shows a compositional bias: polar residues; it reads MVKLNLSNLQ. The propeptide occupies 1–12; it reads MVKLNLSNLQHF. Residues 1 to 38 form a disordered region; that stretch reads MVKLNLSNLQHFAHKKGGGSTSNGRDSQAKRLGAKAAD.

This sequence belongs to the bacterial ribosomal protein bL27 family. The N-terminus is cleaved by ribosomal processing cysteine protease Prp.

The chain is Large ribosomal subunit protein bL27 from Streptococcus equi subsp. zooepidemicus (strain H70).